We begin with the raw amino-acid sequence, 117 residues long: Appetite-regulating hormone (117 aa).

A signal peptide spans 1 to 23 (MPSPGTVCSLLLFSMLWADLAMA). S26 carries O-decanoyl serine; alternate lipidation. Residue S26 is the site of O-hexanoyl serine; alternate attachment. S26 is lipidated: O-octanoyl serine; alternate. The segment at 29–52 (SPEHQKVQQRKESKKPPAKLQPRA) is disordered. A compositionally biased stretch (basic and acidic residues) spans 31 to 43 (EHQKVQQRKESKK). A propeptide spans 52–75 (ALEGLIHPEDTSQVEGAEDELEIR) (removed in mature form). L98 carries the post-translational modification Leucine amide. Residues 99–117 (GKFLQDVLWEEADEVLADE) constitute a propeptide, removed in mature form.

This sequence belongs to the motilin family. In terms of processing, O-octanoylated by GOAT/MBOAT4. O-octanoylation or O-decanoylation is essential for ghrelin activity. The O-decanoylated forms Ghrelin-27-C10 and Ghrelin-28-C10 differ in the length of the carbon backbone of the carboxylic acid bound to Ser-26. A small fraction of ghrelin, ghrelin-27-C10:1, ghrelin-27-C10:2, ghrelin-28-C8:1, ghrelin-28-C10:1, and ghrelin-28-C10:2, may be modified with singly or doubly unsaturated carboxylic acids. Amidation of Leu-98 is essential for obestatin activity.

It localises to the secreted. Functionally, ghrelin is the ligand for growth hormone secretagogue receptor type 1 (GHSR). Induces the release of growth hormone from the pituitary. Has an appetite-stimulating effect, induces adiposity and stimulates gastric acid secretion. Involved in growth regulation. In terms of biological role, obestatin may be the ligand for GPR39. May have an appetite-reducing effect resulting in decreased food intake. May reduce gastric emptying activity and jejunal motility. This Felis catus (Cat) protein is Appetite-regulating hormone (GHRL).